The following is a 57-amino-acid chain: LALLFLVLSAGSGFTQGVRNHVTCRINRGFCVPIRCPGRTRQIGTCFGPRIKCCRSW.

A Pyrrolidone carboxylic acid modification is found at glutamine 16. 3 disulfide bridges follow: cysteine 24/cysteine 53, cysteine 31/cysteine 46, and cysteine 36/cysteine 54.

It belongs to the beta-defensin family. Neutrophilic granules.

Its subcellular location is the secreted. Has bactericidal activity. Active against E.coli ML35 and S.aureus 502A. This Bos taurus (Bovine) protein is Beta-defensin 3 (DEFB3).